The chain runs to 446 residues: Asparagine--tRNA ligase (446 aa).

Belongs to the class-II aminoacyl-tRNA synthetase family. Homodimer.

The protein localises to the cytoplasm. It catalyses the reaction tRNA(Asn) + L-asparagine + ATP = L-asparaginyl-tRNA(Asn) + AMP + diphosphate + H(+). This chain is Asparagine--tRNA ligase, found in Sorangium cellulosum (strain So ce56) (Polyangium cellulosum (strain So ce56)).